A 211-amino-acid polypeptide reads, in one-letter code: 3,4-dihydroxy-2-butanone 4-phosphate synthase (211 aa).

Residues 37–38, D42, 150–154, and E174 contribute to the D-ribulose 5-phosphate site; these read RE and RGGHT. E38 is a Mg(2+) binding site. H153 serves as a coordination point for Mg(2+).

The protein belongs to the DHBP synthase family. As to quaternary structure, homodimer. It depends on Mg(2+) as a cofactor. Mn(2+) serves as cofactor.

It carries out the reaction D-ribulose 5-phosphate = (2S)-2-hydroxy-3-oxobutyl phosphate + formate + H(+). The protein operates within cofactor biosynthesis; riboflavin biosynthesis; 2-hydroxy-3-oxobutyl phosphate from D-ribulose 5-phosphate: step 1/1. Functionally, catalyzes the conversion of D-ribulose 5-phosphate to formate and 3,4-dihydroxy-2-butanone 4-phosphate. This Baumannia cicadellinicola subsp. Homalodisca coagulata protein is 3,4-dihydroxy-2-butanone 4-phosphate synthase.